A 454-amino-acid polypeptide reads, in one-letter code: Aspartokinase 3 (454 aa).

2 consecutive ACT domains span residues 312 to 388 (ISKY…ALIM) and 389 to 454 (VVGE…VLIS).

Belongs to the aspartokinase family. As to quaternary structure, monomer.

It catalyses the reaction L-aspartate + ATP = 4-phospho-L-aspartate + ADP. The protein operates within amino-acid biosynthesis; L-lysine biosynthesis via DAP pathway; (S)-tetrahydrodipicolinate from L-aspartate: step 1/4. It functions in the pathway amino-acid biosynthesis; L-methionine biosynthesis via de novo pathway; L-homoserine from L-aspartate: step 1/3. Its pathway is amino-acid biosynthesis; L-threonine biosynthesis; L-threonine from L-aspartate: step 1/5. Its function is as follows. Catalyzes the phosphorylation of the beta-carboxyl group of aspartic acid with ATP to yield 4-phospho-L-aspartate, which is involved in the branched biosynthetic pathway leading to the biosynthesis of amino acids threonine, isoleucine and methionine. This is Aspartokinase 3 (yclM) from Bacillus subtilis (strain 168).